The primary structure comprises 333 residues: Ribosomal RNA small subunit methyltransferase H (333 aa).

Residues 42-44, aspartate 62, phenylalanine 86, aspartate 105, and glutamine 112 each bind S-adenosyl-L-methionine; that span reads GGH.

The protein belongs to the methyltransferase superfamily. RsmH family.

Its subcellular location is the cytoplasm. The enzyme catalyses cytidine(1402) in 16S rRNA + S-adenosyl-L-methionine = N(4)-methylcytidine(1402) in 16S rRNA + S-adenosyl-L-homocysteine + H(+). Its function is as follows. Specifically methylates the N4 position of cytidine in position 1402 (C1402) of 16S rRNA. This chain is Ribosomal RNA small subunit methyltransferase H, found in Cupriavidus necator (strain ATCC 17699 / DSM 428 / KCTC 22496 / NCIMB 10442 / H16 / Stanier 337) (Ralstonia eutropha).